The sequence spans 425 residues: GTPase Obg (425 aa).

Residues 1–158 (MFVDVARIYV…RWLLLELKVV (158 aa)) form the Obg domain. One can recognise an OBG-type G domain in the interval 159-330 (ADVGLVGFPN…LLEAAYDLIR (172 aa)). GTP-binding positions include 165-172 (GFPNAGKS), 190-194 (FTTLT), 212-215 (DIPG), 282-285 (NKMD), and 311-313 (SGA). Positions 172 and 192 each coordinate Mg(2+). An OCT domain is found at 345–422 (VYRPKEEGWR…VCDIEFELMA (78 aa)).

The protein belongs to the TRAFAC class OBG-HflX-like GTPase superfamily. OBG GTPase family. Monomer. Mg(2+) serves as cofactor.

The protein localises to the cytoplasm. Its function is as follows. An essential GTPase which binds GTP, GDP and possibly (p)ppGpp with moderate affinity, with high nucleotide exchange rates and a fairly low GTP hydrolysis rate. Plays a role in control of the cell cycle, stress response, ribosome biogenesis and in those bacteria that undergo differentiation, in morphogenesis control. The sequence is that of GTPase Obg from Symbiobacterium thermophilum (strain DSM 24528 / JCM 14929 / IAM 14863 / T).